The chain runs to 287 residues: Shikimate dehydrogenase (NADP(+)) (287 aa).

Residues 20–22 and threonine 67 contribute to the shikimate site; that span reads SRS. The Proton acceptor role is filled by lysine 71. An NADP(+)-binding site is contributed by glutamate 84. Shikimate contacts are provided by asparagine 93 and aspartate 108. Residues 132 to 136, 156 to 161, and methionine 226 each bind NADP(+); these read GAGGA and NRTAAR. Residue tyrosine 228 participates in shikimate binding. An NADP(+)-binding site is contributed by glycine 250.

The protein belongs to the shikimate dehydrogenase family. In terms of assembly, homodimer.

It catalyses the reaction shikimate + NADP(+) = 3-dehydroshikimate + NADPH + H(+). It functions in the pathway metabolic intermediate biosynthesis; chorismate biosynthesis; chorismate from D-erythrose 4-phosphate and phosphoenolpyruvate: step 4/7. Involved in the biosynthesis of the chorismate, which leads to the biosynthesis of aromatic amino acids. Catalyzes the reversible NADPH linked reduction of 3-dehydroshikimate (DHSA) to yield shikimate (SA). This Bordetella parapertussis (strain 12822 / ATCC BAA-587 / NCTC 13253) protein is Shikimate dehydrogenase (NADP(+)).